Reading from the N-terminus, the 95-residue chain is Aspartyl/glutamyl-tRNA(Asn/Gln) amidotransferase subunit C (95 aa).

This sequence belongs to the GatC family. Heterotrimer of A, B and C subunits.

The enzyme catalyses L-glutamyl-tRNA(Gln) + L-glutamine + ATP + H2O = L-glutaminyl-tRNA(Gln) + L-glutamate + ADP + phosphate + H(+). It catalyses the reaction L-aspartyl-tRNA(Asn) + L-glutamine + ATP + H2O = L-asparaginyl-tRNA(Asn) + L-glutamate + ADP + phosphate + 2 H(+). In terms of biological role, allows the formation of correctly charged Asn-tRNA(Asn) or Gln-tRNA(Gln) through the transamidation of misacylated Asp-tRNA(Asn) or Glu-tRNA(Gln) in organisms which lack either or both of asparaginyl-tRNA or glutaminyl-tRNA synthetases. The reaction takes place in the presence of glutamine and ATP through an activated phospho-Asp-tRNA(Asn) or phospho-Glu-tRNA(Gln). This is Aspartyl/glutamyl-tRNA(Asn/Gln) amidotransferase subunit C from Dehalococcoides mccartyi (strain ATCC BAA-2100 / JCM 16839 / KCTC 5957 / BAV1).